The sequence spans 364 residues: MAKRCLIMAGGTGGHVFPGLAVANALRAEGWDIHWLGTAERMEAQVVPKHDIPIHFIPVKGLRGKGISARIQGAVALVKSLFSARRIIKRLQPDIVVGFGGYASGPGGVAAKSLGIPVIVHEQNAAAGMTNKLLSKLASRVLLGFDDAKEQFSGAADNVHTVGNPVRDDIWQVKPKKRESYAGATSLNMLVVGGSLGAQILNETVPETCGVLNGLSIKHQCGKGNSDGVVKAYESVGADMANVELSDFIDNMAAAYEWADFIVCRAGALTVSEVAASGRAAIFVPLPFAVDDHQTKNAQSLVKQNAALMIAQSVLKQNLGQAVRRWLEHPEDCLKMGALAKTCASIHATENVVSHVKSVVGEGD.

UDP-N-acetyl-alpha-D-glucosamine-binding positions include 12 to 14 (TGG), Asn124, Arg167, Ser195, Ile249, 268 to 273 (ALTVSE), and Gln294.

The protein belongs to the glycosyltransferase 28 family. MurG subfamily.

Its subcellular location is the cell inner membrane. The catalysed reaction is di-trans,octa-cis-undecaprenyl diphospho-N-acetyl-alpha-D-muramoyl-L-alanyl-D-glutamyl-meso-2,6-diaminopimeloyl-D-alanyl-D-alanine + UDP-N-acetyl-alpha-D-glucosamine = di-trans,octa-cis-undecaprenyl diphospho-[N-acetyl-alpha-D-glucosaminyl-(1-&gt;4)]-N-acetyl-alpha-D-muramoyl-L-alanyl-D-glutamyl-meso-2,6-diaminopimeloyl-D-alanyl-D-alanine + UDP + H(+). The protein operates within cell wall biogenesis; peptidoglycan biosynthesis. Its function is as follows. Cell wall formation. Catalyzes the transfer of a GlcNAc subunit on undecaprenyl-pyrophosphoryl-MurNAc-pentapeptide (lipid intermediate I) to form undecaprenyl-pyrophosphoryl-MurNAc-(pentapeptide)GlcNAc (lipid intermediate II). This chain is UDP-N-acetylglucosamine--N-acetylmuramyl-(pentapeptide) pyrophosphoryl-undecaprenol N-acetylglucosamine transferase, found in Alteromonas mediterranea (strain DSM 17117 / CIP 110805 / LMG 28347 / Deep ecotype).